The primary structure comprises 525 residues: GMP synthase [glutamine-hydrolyzing] (525 aa).

A Glutamine amidotransferase type-1 domain is found at 8–207 (KILILDFGSQ…ALDICGCKAN (200 aa)). Cys-85 functions as the Nucleophile in the catalytic mechanism. Residues His-181 and Glu-183 contribute to the active site. One can recognise a GMPS ATP-PPase domain in the interval 208 to 400 (WKPSSIIEDA…LGLPYNMLYR (193 aa)). 235 to 241 (SGGVDSS) is an ATP binding site.

Homodimer.

It carries out the reaction XMP + L-glutamine + ATP + H2O = GMP + L-glutamate + AMP + diphosphate + 2 H(+). Its pathway is purine metabolism; GMP biosynthesis; GMP from XMP (L-Gln route): step 1/1. Functionally, catalyzes the synthesis of GMP from XMP. The polypeptide is GMP synthase [glutamine-hydrolyzing] (Shewanella frigidimarina (strain NCIMB 400)).